The chain runs to 636 residues: 1-deoxy-D-xylulose-5-phosphate synthase (636 aa).

Thiamine diphosphate is bound by residues His77 and 118–120 (GHS). Asp149 is a Mg(2+) binding site. Thiamine diphosphate is bound by residues 150–151 (GA), Asn178, Tyr290, and Glu375. Asn178 is a Mg(2+) binding site.

The protein belongs to the transketolase family. DXPS subfamily. In terms of assembly, homodimer. Mg(2+) is required as a cofactor. It depends on thiamine diphosphate as a cofactor.

The catalysed reaction is D-glyceraldehyde 3-phosphate + pyruvate + H(+) = 1-deoxy-D-xylulose 5-phosphate + CO2. Its pathway is metabolic intermediate biosynthesis; 1-deoxy-D-xylulose 5-phosphate biosynthesis; 1-deoxy-D-xylulose 5-phosphate from D-glyceraldehyde 3-phosphate and pyruvate: step 1/1. Its function is as follows. Catalyzes the acyloin condensation reaction between C atoms 2 and 3 of pyruvate and glyceraldehyde 3-phosphate to yield 1-deoxy-D-xylulose-5-phosphate (DXP). This Cytophaga hutchinsonii (strain ATCC 33406 / DSM 1761 / CIP 103989 / NBRC 15051 / NCIMB 9469 / D465) protein is 1-deoxy-D-xylulose-5-phosphate synthase.